We begin with the raw amino-acid sequence, 99 residues long: Gibberellin-regulated protein 3 (99 aa).

Residues 1 to 26 form the signal peptide; sequence MAIFRSTLVLLLILFCLTTFELHVHA.

Belongs to the GASA family. Post-translationally, six disulfide bonds may be present. As to expression, expressed in siliques, dry seeds and vasculature of roots and rosette leaves.

The protein localises to the secreted. Gibberellin-regulated protein that may function in hormonal controlled steps of development such as seed germination, flowering and seed maturation. This chain is Gibberellin-regulated protein 3 (GASA3), found in Arabidopsis thaliana (Mouse-ear cress).